We begin with the raw amino-acid sequence, 485 residues long: Peroxisomal catalase (485 aa).

Active-site residues include histidine 53 and asparagine 126. Tyrosine 336 contacts heme.

This sequence belongs to the catalase family. As to quaternary structure, homotetramer. Requires heme as cofactor.

The protein resides in the peroxisome matrix. It catalyses the reaction 2 H2O2 = O2 + 2 H2O. Its function is as follows. Catalyzes the degradation of hydrogen peroxide (H(2)O(2)) generated by peroxisomal oxidases to water and oxygen, thereby protecting cells from the toxic effects of hydrogen peroxide. This is Peroxisomal catalase (CAT1) from Candida albicans (strain SC5314 / ATCC MYA-2876) (Yeast).